The sequence spans 275 residues: MRNRAFLFGLFFIEYACLVLFAAPTRASLLKSNVESTLAEQWDSNGTRTLQADDSKRISAEERSMEQALLPGAEAMGKTKVPEKAVPRASLGSKLNPLNWPKRIWYKLRLWYARVRLYILKQKTTGENAIGIAAMEGLTPLSLKKLKNEIFHYSSSEPHDKWLIEKDYNSFVKHYFSQFYGLYQNPPVSEIDKWNILVEEMLPLERIAVRMAMDRVGRIVDKGYSIEKLISLDVSPLLYLRLMDSKGVFENVKENKDAIEHLRDYVEAYHKNVMM.

An N-terminal signal peptide occupies residues 1 to 27; that stretch reads MRNRAFLFGLFFIEYACLVLFAAPTRA. A glycan (N-linked (GlcNAc...) asparagine) is linked at asparagine 45. Residues 48–63 carry the RxLR-dEER motif; that stretch reads RTLQADDSKRISAEER.

Belongs to the RxLR effector family.

It localises to the secreted. The protein resides in the host cell membrane. Its function is as follows. Secreted effector that completely suppresses the host cell death induced by cell death-inducing proteins. The protein is Secreted RxLR effector protein 153 of Plasmopara viticola (Downy mildew of grapevine).